The following is an 84-amino-acid chain: Small ribosomal subunit protein uS17c (84 aa).

Belongs to the universal ribosomal protein uS17 family. Part of the 30S ribosomal subunit.

Its subcellular location is the plastid. The protein resides in the chloroplast. In terms of biological role, one of the primary rRNA binding proteins, it binds specifically to the 5'-end of 16S ribosomal RNA. The protein is Small ribosomal subunit protein uS17c (rps17) of Thalassiosira pseudonana (Marine diatom).